We begin with the raw amino-acid sequence, 150 residues long: MQIILLEKIGGLGNLGDIVTVKNGYARNFLIPAGKAKRATEANMKEFEARRAELEAKQAEILADARVRQEKLDGQTITVAQKAGVDGRLFGSVTNADIAAAIVAAGIEAVKANVRLPNGPLKAVGEYEVEVALHTDAVAKITVAVVAATE.

It belongs to the bacterial ribosomal protein bL9 family.

Functionally, binds to the 23S rRNA. The polypeptide is Large ribosomal subunit protein bL9 (Neisseria meningitidis serogroup A / serotype 4A (strain DSM 15465 / Z2491)).